The following is a 543-amino-acid chain: Probable protein kinase UbiB (543 aa).

The 379-residue stretch at 123-501 (DFDQQALASA…RVRQGQSRYL (379 aa)) folds into the Protein kinase domain. ATP is bound by residues 129–137 (LASASIAQV) and Lys-152. The active-site Proton acceptor is the Asp-287. Transmembrane regions (helical) follow at residues 498–518 (SRYL…LLSG) and 519–539 (DVEV…VIGW).

This sequence belongs to the ABC1 family. UbiB subfamily.

It is found in the cell inner membrane. It participates in cofactor biosynthesis; ubiquinone biosynthesis [regulation]. Its function is as follows. Is probably a protein kinase regulator of UbiI activity which is involved in aerobic coenzyme Q (ubiquinone) biosynthesis. The sequence is that of Probable protein kinase UbiB from Serratia proteamaculans (strain 568).